The sequence spans 229 residues: Cytochrome c oxidase subunit 2 (229 aa).

The Mitochondrial intermembrane portion of the chain corresponds to 1-14 (MANHLQFNFQDATS). Residues 15 to 45 (PLMQELVKFHDHSLTILFFISALILYVLMMT) traverse the membrane as a helical segment. Residues 46–59 (SLSKLTNKNILDSQ) lie on the Mitochondrial matrix side of the membrane. The chain crosses the membrane as a helical span at residues 60-87 (EIEMVWTVIPAFILIMLALPSIQILYLM). Residues 88–229 (DEIASPDITI…FESWIIKLSL (142 aa)) lie on the Mitochondrial intermembrane side of the membrane. Cu cation is bound by residues His162, Cys197, Glu199, Cys201, His205, and Met208. Residue Glu199 participates in Mg(2+) binding.

This sequence belongs to the cytochrome c oxidase subunit 2 family. In terms of assembly, component of the cytochrome c oxidase (complex IV, CIV), a multisubunit enzyme composed of 14 subunits. The complex is composed of a catalytic core of 3 subunits MT-CO1, MT-CO2 and MT-CO3, encoded in the mitochondrial DNA, and 11 supernumerary subunits COX4I, COX5A, COX5B, COX6A, COX6B, COX6C, COX7A, COX7B, COX7C, COX8 and NDUFA4, which are encoded in the nuclear genome. The complex exists as a monomer or a dimer and forms supercomplexes (SCs) in the inner mitochondrial membrane with NADH-ubiquinone oxidoreductase (complex I, CI) and ubiquinol-cytochrome c oxidoreductase (cytochrome b-c1 complex, complex III, CIII), resulting in different assemblies (supercomplex SCI(1)III(2)IV(1) and megacomplex MCI(2)III(2)IV(2)). Found in a complex with TMEM177, COA6, COX18, COX20, SCO1 and SCO2. Interacts with TMEM177 in a COX20-dependent manner. Interacts with COX20. Interacts with COX16. Cu cation serves as cofactor.

It localises to the mitochondrion inner membrane. It catalyses the reaction 4 Fe(II)-[cytochrome c] + O2 + 8 H(+)(in) = 4 Fe(III)-[cytochrome c] + 2 H2O + 4 H(+)(out). Functionally, component of the cytochrome c oxidase, the last enzyme in the mitochondrial electron transport chain which drives oxidative phosphorylation. The respiratory chain contains 3 multisubunit complexes succinate dehydrogenase (complex II, CII), ubiquinol-cytochrome c oxidoreductase (cytochrome b-c1 complex, complex III, CIII) and cytochrome c oxidase (complex IV, CIV), that cooperate to transfer electrons derived from NADH and succinate to molecular oxygen, creating an electrochemical gradient over the inner membrane that drives transmembrane transport and the ATP synthase. Cytochrome c oxidase is the component of the respiratory chain that catalyzes the reduction of oxygen to water. Electrons originating from reduced cytochrome c in the intermembrane space (IMS) are transferred via the dinuclear copper A center (CU(A)) of subunit 2 and heme A of subunit 1 to the active site in subunit 1, a binuclear center (BNC) formed by heme A3 and copper B (CU(B)). The BNC reduces molecular oxygen to 2 water molecules using 4 electrons from cytochrome c in the IMS and 4 protons from the mitochondrial matrix. This chain is Cytochrome c oxidase subunit 2 (MT-CO2), found in Myxine glutinosa (Atlantic hagfish).